The sequence spans 116 residues: Dynein light chain Tctex-type 3 (116 aa).

3'-nitrotyrosine is present on Y4.

The protein belongs to the dynein light chain Tctex-type family. Homodimer. The cytoplasmic dynein 1 complex consists of two catalytic heavy chains (HCs) and a number of non-catalytic subunits presented by intermediate chains (ICs), light intermediate chains (LICs) and light chains (LCs); the composition seems to vary in respect to the IC, LIC and LC composition. The heavy chain homodimer serves as a scaffold for the probable homodimeric assembly of the respective non-catalytic subunits. The ICs and LICs bind directly to the HC dimer and the LCs assemble on the IC dimer. DYNLT1 and DYNLT3 compete for association with dynein IC (DYNC1I1 or DYNC1I2). Self-associates. Interacts with DYNC1I1 and DYNC1I2. Interacts with BUB3. Interacts with SATB1 in nucleus to form complex with matrix attachment regions (MARs) of DNA.

The protein resides in the nucleus. It localises to the cytoplasm. It is found in the cytoskeleton. Its subcellular location is the chromosome. The protein localises to the centromere. The protein resides in the kinetochore. Acts as one of several non-catalytic accessory components of the cytoplasmic dynein 1 complex that are thought to be involved in linking dynein to cargos and to adapter proteins that regulate dynein function. Cytoplasmic dynein 1 acts as a motor for the intracellular retrograde motility of vesicles and organelles along microtubules. Probably binds BUB3 as part of transport cargo. Required for the efficient progression through mitosis. This Homo sapiens (Human) protein is Dynein light chain Tctex-type 3 (DYNLT3).